We begin with the raw amino-acid sequence, 385 residues long: GTP cyclohydrolase 1 type 2 homolog (385 aa).

A divalent metal cation is bound by residues His64, His65, Asp103, His333, and Glu337.

It belongs to the GTP cyclohydrolase I type 2/NIF3 family. Homohexamer.

The sequence is that of GTP cyclohydrolase 1 type 2 homolog from Mycobacterium leprae (strain TN).